A 389-amino-acid chain; its full sequence is Growth/differentiation factor 2 (389 aa).

Residues 1–20 (MWRVGHLLLLMSIVFRITEE) form the signal peptide. The propeptide occupies 21 to 280 (KSLGDAGSLE…PVSNRHRRRK (260 aa)). Asn-65, Asn-118, Asn-127, and Asn-232 each carry an N-linked (GlcNAc...) asparagine glycan. Residues 263 to 272 (QQQVGNQAPV) are compositionally biased toward polar residues. Residues 263-284 (QQQVGNQAPVSNRHRRRKRKAK) are disordered. Positions 274 to 284 (NRHRRRKRKAK) are enriched in basic residues. 3 cysteine pairs are disulfide-bonded: Cys-288-Cys-354, Cys-317-Cys-386, and Cys-321-Cys-388. Asn-342 carries an N-linked (GlcNAc...) asparagine glycan.

The protein belongs to the TGF-beta family. Homodimer; disulfide-linked. In terms of processing, a reversible disulfide bond can be formed between the two subunits in the homodimer; this has no effect on gdf2 activity.

It is found in the secreted. Its function is as follows. Potent circulating inhibitor of angiogenesis. Signals through the type I activin receptor ACVRL1 but not other Alks. Signaling through SMAD1 in endothelial cells requires TGF-beta coreceptor endoglin/eng. The chain is Growth/differentiation factor 2 (gdf2) from Danio rerio (Zebrafish).